Reading from the N-terminus, the 497-residue chain is Probable cytosol aminopeptidase (497 aa).

Residues K267 and D272 each coordinate Mn(2+). K279 is an active-site residue. Residues D290, D349, and E351 each coordinate Mn(2+). R353 is a catalytic residue.

It belongs to the peptidase M17 family. It depends on Mn(2+) as a cofactor.

It is found in the cytoplasm. It catalyses the reaction Release of an N-terminal amino acid, Xaa-|-Yaa-, in which Xaa is preferably Leu, but may be other amino acids including Pro although not Arg or Lys, and Yaa may be Pro. Amino acid amides and methyl esters are also readily hydrolyzed, but rates on arylamides are exceedingly low.. It carries out the reaction Release of an N-terminal amino acid, preferentially leucine, but not glutamic or aspartic acids.. Presumably involved in the processing and regular turnover of intracellular proteins. Catalyzes the removal of unsubstituted N-terminal amino acids from various peptides. The polypeptide is Probable cytosol aminopeptidase (Nitrosomonas eutropha (strain DSM 101675 / C91 / Nm57)).